Here is a 949-residue protein sequence, read N- to C-terminus: Coiled-coil domain-containing protein 80 (949 aa).

An N-terminal signal peptide occupies residues 1 to 22; sequence MMWKMGPHFTTLLAMWLVCGSA. Disordered regions lie at residues 24–79, 112–132, and 289–610; these read HSPA…RRKS, SSAR…MLRF, and HVVQ…PKKS. Basic and acidic residues predominate over residues 112–123; sequence SSAREMVRDEGS. Positions 295 to 307 are enriched in gly residues; sequence NEGGGGAGGTGLG. The segment covering 308–328 has biased composition (basic and acidic residues); that stretch reads GDKRKEDPRRTQVHPTREAPR. A compositionally biased stretch (low complexity) spans 345 to 380; that stretch reads RATTLPPAPVTTATRATSRVVTIAARPTTTTAYPAT. The span at 419–429 shows a compositional bias: basic and acidic residues; sequence PRKEQQREKPQ. Residues 436-445 show a composition bias toward polar residues; that stretch reads KATNYGSFTA. Over residues 463-477 the composition is skewed to basic and acidic residues; the sequence is RFRDNRTDKREHGHQ. A glycan (N-linked (GlcNAc...) asparagine) is linked at Asn467. Residues 487 to 498 are compositionally biased toward basic residues; it reads KPVKGKLPKKKD. Composition is skewed to basic and acidic residues over residues 499–510, 534–548, and 556–581; these read RILSNEYEDKYD, KESK…PEKE, and AKQD…EKDK. Glycyl lysine isopeptide (Lys-Gly) (interchain with G-Cter in SUMO2) cross-links involve residues Lys544 and Lys547. Positions 554–587 form a coiled coil; that stretch reads KSAKQDKLLKSEKQAKKAEKKTKQEKDKNKKKKA.

Belongs to the CCDC80 family. In terms of assembly, binds to various extracellular matrix proteins. In terms of processing, phosphorylated. In terms of tissue distribution, expressed in brain, stomach, colon, rectum, liver, lung, kidney, adipocytes and testis.

It localises to the secreted. Its subcellular location is the extracellular space. The protein resides in the extracellular matrix. Functionally, promotes cell adhesion and matrix assembly. This chain is Coiled-coil domain-containing protein 80 (Ccdc80), found in Mus musculus (Mouse).